An 86-amino-acid polypeptide reads, in one-letter code: MIOREX complex component 7 (86 aa).

Associates with the mitochondrial ribosome.

Its subcellular location is the mitochondrion. Its function is as follows. Component of MIOREX complexes, large expressome-like assemblies of ribosomes with factors involved in all the steps of post-transcriptional gene expression. In Saccharomyces cerevisiae (strain ATCC 204508 / S288c) (Baker's yeast), this protein is MIOREX complex component 7.